The following is a 551-amino-acid chain: MSVSKARLQSVVRLSRTVPYSKTMVRSFHVSCAVKNSGNVPTPRNKSFFSRALEMAEVTSSLSMLGAVALFQSLRRLNNSSPKGKSGVPKKNIVVLGSGWGAVAAIKNLDPSLYNITLVSPRDHFLFTPMLPSCTVGTLRLPSITEPIVALFKGKIDPSNIHQAECTAIDTSAKKVTIRGTTEANEGKEAVIPYDTLVFAIGAGNQTFGIQGVRDHGCFLKEAGDAKKVFNRIFEILEQVRFNKDLSPEERARLLHITVVGGGPTGMEFAAEMQDFIDNDVKDMFPELQKDIHVTLIEAAPGVLPMFTKSLITYTENLFKNLNIKIMTKTVVKDVNEKNLIVQKTNPDGSKAMQEIPYGMLVWAAGITARPLTRTLMSSIPEQSGARKGLIVDEFFRVKGVPEMYAVGDCAFSGLPATAQVANQQGAWLAKNLNVEGKKFALHERIQALEKQLGEKEAPSQVAGLKQQVEQLKLEPFKYHHQGALAYVGDEKAIADLKLPFMKKMLPLQGIVGHTFWRLAYLNELISARSQFMVLIDWLKTRLFGRYDAKV.

The N-terminal 35 residues, 1–35, are a transit peptide targeting the mitochondrion; it reads MSVSKARLQSVVRLSRTVPYSKTMVRSFHVSCAVK. Residue 92–122 participates in FAD binding; it reads NIVVLGSGWGAVAAIKNLDPSLYNITLVSPR. 255–291 is an NAD(+) binding site; the sequence is LHITVVGGGPTGMEFAAEMQDFIDNDVKDMFPELQKD.

It belongs to the NADH dehydrogenase family.

It localises to the mitochondrion. The enzyme catalyses a quinone + NADH + H(+) = a quinol + NAD(+). It catalyses the reaction a ubiquinone + NADH + H(+) = a ubiquinol + NAD(+). Catalyzes the oxidation of NADH. The sequence is that of Probable NADH-ubiquinone oxidoreductase C947.15c, mitochondrial from Schizosaccharomyces pombe (strain 972 / ATCC 24843) (Fission yeast).